We begin with the raw amino-acid sequence, 200 residues long: Molybdenum cofactor guanylyltransferase (200 aa).

GTP-binding positions include 10 to 12, Lys23, Asn51, Asp69, and Asp99; that span reads LAG. Asp99 lines the Mg(2+) pocket.

It belongs to the MobA family. In terms of assembly, monomer. Mg(2+) is required as a cofactor.

The protein localises to the cytoplasm. It carries out the reaction Mo-molybdopterin + GTP + H(+) = Mo-molybdopterin guanine dinucleotide + diphosphate. Its function is as follows. Transfers a GMP moiety from GTP to Mo-molybdopterin (Mo-MPT) cofactor (Moco or molybdenum cofactor) to form Mo-molybdopterin guanine dinucleotide (Mo-MGD) cofactor. This chain is Molybdenum cofactor guanylyltransferase, found in Shewanella pealeana (strain ATCC 700345 / ANG-SQ1).